We begin with the raw amino-acid sequence, 957 residues long: ERC protein 2 (957 aa).

The span at 1-13 (MYGSARTITNLEG) shows a compositional bias: polar residues. The interval 1-44 (MYGSARTITNLEGSPSRSPRLPRSPRLGHRRTSSGGGGGTGKTL) is disordered. Positions 14 to 25 (SPSRSPRLPRSP) are enriched in low complexity. 2 positions are modified to phosphoserine: Ser-65 and Ser-666. Residues 140–917 (RQVRDSTMLD…RMKLMADNYD (778 aa)) are a coiled coil. Residues 918–957 (DDHHHYHHHHHHHHHRSPGRSQHSNHRPSPDQDDEEGIWA) are disordered. Positions 922–943 (HYHHHHHHHHHRSPGRSQHSNH) are enriched in basic residues. The span at 948–957 (DQDDEEGIWA) shows a compositional bias: acidic residues.

As to quaternary structure, interacts with BSN, ERC1, PPFIA1, PPFIA2, PPFIA3 and PPFIA4. Interacts through its C-terminus with the PDZ domain of RIMS1. Part of a complex consisting of ERC2, RIMS1 and UNC13A.

The protein localises to the cytoplasm. It is found in the synapse. The protein resides in the presynaptic active zone. Its subcellular location is the cytoskeleton. Its function is as follows. Thought to be involved in the organization of the cytomatrix at the nerve terminals active zone (CAZ) which regulates neurotransmitter release. Seems to act together with BSN. May recruit liprin-alpha proteins to the CAZ. This Homo sapiens (Human) protein is ERC protein 2 (ERC2).